A 527-amino-acid polypeptide reads, in one-letter code: EGF domain-specific O-linked N-acetylglucosamine transferase (527 aa).

A signal peptide spans Met-1–Ser-17. Residues Asp-295–Asp-297 carry the Required for optimal activity motif. Asn-354 carries an N-linked (GlcNAc...) asparagine glycan. The Prevents secretion from ER signature appears at His-524–Leu-527.

The protein belongs to the glycosyltransferase 61 family.

The protein resides in the endoplasmic reticulum lumen. The enzyme catalyses L-seryl-[protein] + UDP-N-acetyl-alpha-D-glucosamine = 3-O-(N-acetyl-beta-D-glucosaminyl)-L-seryl-[protein] + UDP + H(+). The catalysed reaction is L-threonyl-[protein] + UDP-N-acetyl-alpha-D-glucosamine = 3-O-(N-acetyl-beta-D-glucosaminyl)-L-threonyl-[protein] + UDP + H(+). In terms of biological role, catalyzes the transfer of a single N-acetylglucosamine from UDP-GlcNAc to a serine or threonine residue in extracellular proteins resulting in their modification with a beta-linked N-acetylglucosamine (O-GlcNAc). Specifically glycosylates the Thr residue located between the fifth and sixth conserved cysteines of folded EGF-like domains. This is EGF domain-specific O-linked N-acetylglucosamine transferase (EOGT) from Pan troglodytes (Chimpanzee).